The chain runs to 512 residues: UDP-N-acetylmuramoyl-L-alanyl-D-glutamate--2,6-diaminopimelate ligase (512 aa).

S32 serves as a coordination point for UDP-N-acetyl-alpha-D-muramoyl-L-alanyl-D-glutamate. Position 114–120 (114–120 (GTNGKTT)) interacts with ATP. Residues 156–157 (TT), S183, and R191 contribute to the UDP-N-acetyl-alpha-D-muramoyl-L-alanyl-D-glutamate site. Residue K223 is modified to N6-carboxylysine. Meso-2,6-diaminopimelate contacts are provided by residues R395, 419-422 (DNPR), G469, and E473. Positions 419–422 (DNPR) match the Meso-diaminopimelate recognition motif motif.

This sequence belongs to the MurCDEF family. MurE subfamily. Mg(2+) is required as a cofactor. In terms of processing, carboxylation is probably crucial for Mg(2+) binding and, consequently, for the gamma-phosphate positioning of ATP.

The protein resides in the cytoplasm. The catalysed reaction is UDP-N-acetyl-alpha-D-muramoyl-L-alanyl-D-glutamate + meso-2,6-diaminopimelate + ATP = UDP-N-acetyl-alpha-D-muramoyl-L-alanyl-gamma-D-glutamyl-meso-2,6-diaminopimelate + ADP + phosphate + H(+). The protein operates within cell wall biogenesis; peptidoglycan biosynthesis. Functionally, catalyzes the addition of meso-diaminopimelic acid to the nucleotide precursor UDP-N-acetylmuramoyl-L-alanyl-D-glutamate (UMAG) in the biosynthesis of bacterial cell-wall peptidoglycan. The chain is UDP-N-acetylmuramoyl-L-alanyl-D-glutamate--2,6-diaminopimelate ligase from Chlorobium phaeobacteroides (strain DSM 266 / SMG 266 / 2430).